The primary structure comprises 199 residues: Mediator of RNA polymerase II transcription subunit 10 (199 aa).

This sequence belongs to the Mediator complex subunit 10 family. As to quaternary structure, component of the Mediator complex.

The protein resides in the nucleus. Component of the Mediator complex, a coactivator involved in the regulated transcription of nearly all RNA polymerase II-dependent genes. Mediator functions as a bridge to convey information from gene-specific regulatory proteins to the basal RNA polymerase II transcription machinery. Mediator is recruited to promoters by direct interactions with regulatory proteins and serves as a scaffold for the assembly of a functional preinitiation complex with RNA polymerase II and the general transcription factors. The chain is Mediator of RNA polymerase II transcription subunit 10 (NUT2) from Candida glabrata (strain ATCC 2001 / BCRC 20586 / JCM 3761 / NBRC 0622 / NRRL Y-65 / CBS 138) (Yeast).